We begin with the raw amino-acid sequence, 199 residues long: Putative pseudouridine methyltransferase (199 aa).

The S-adenosyl-L-methionine site is built by Leu-132 and Cys-186.

This sequence belongs to the methyltransferase superfamily. TrmY family.

It is found in the cytoplasm. This is Putative pseudouridine methyltransferase from Vibrio parahaemolyticus serotype O3:K6 (strain RIMD 2210633).